Consider the following 908-residue polypeptide: Translation initiation factor IF-2 (908 aa).

Disordered stretches follow at residues Glu-123 to Lys-154 and Lys-212 to Lys-278. Positions Glu-407–Lys-577 constitute a tr-type G domain. The tract at residues Gly-416–Thr-423 is G1. Position 416–423 (Gly-416–Thr-423) interacts with GTP. The segment at Gly-441–His-445 is G2. The tract at residues Asp-463–Gly-466 is G3. GTP contacts are provided by residues Asp-463 to His-467 and Asn-517 to Asp-520. The interval Asn-517–Asp-520 is G4. The interval Ser-553 to Ile-555 is G5.

This sequence belongs to the TRAFAC class translation factor GTPase superfamily. Classic translation factor GTPase family. IF-2 subfamily.

Its subcellular location is the cytoplasm. One of the essential components for the initiation of protein synthesis. Protects formylmethionyl-tRNA from spontaneous hydrolysis and promotes its binding to the 30S ribosomal subunits. Also involved in the hydrolysis of GTP during the formation of the 70S ribosomal complex. This is Translation initiation factor IF-2 from Amoebophilus asiaticus (strain 5a2).